A 215-amino-acid polypeptide reads, in one-letter code: Orotate phosphoribosyltransferase (215 aa).

Residue Lys25 coordinates 5-phospho-alpha-D-ribose 1-diphosphate. 33–34 (FF) provides a ligand contact to orotate. 5-phospho-alpha-D-ribose 1-diphosphate contacts are provided by residues 71 to 72 (YK), Arg98, Lys99, Lys102, His104, and 124 to 132 (DDVITAGTA). Orotate-binding residues include Thr128 and Arg156.

The protein belongs to the purine/pyrimidine phosphoribosyltransferase family. PyrE subfamily. In terms of assembly, homodimer.

The enzyme catalyses orotidine 5'-phosphate + diphosphate = orotate + 5-phospho-alpha-D-ribose 1-diphosphate. It participates in pyrimidine metabolism; UMP biosynthesis via de novo pathway; UMP from orotate: step 1/2. In terms of biological role, catalyzes the transfer of a ribosyl phosphate group from 5-phosphoribose 1-diphosphate to orotate, leading to the formation of orotidine monophosphate (OMP). In Schizosaccharomyces pombe (strain 972 / ATCC 24843) (Fission yeast), this protein is Orotate phosphoribosyltransferase (ura5).